Here is a 585-residue protein sequence, read N- to C-terminus: uncharacterized protein (585 aa).

The segment at 27–59 (DDSERSVKSVSVSISDDEDSKTDVQDNMATPST) is disordered.

This is an uncharacterized protein from Saccharomyces cerevisiae (strain ATCC 204508 / S288c) (Baker's yeast).